We begin with the raw amino-acid sequence, 175 residues long: Gamma-crystallin B (175 aa).

2 Beta/gamma crystallin 'Greek key' domains span residues 2 to 40 (GKIT…RVDS) and 41 to 83 (GCWM…RLIP). The connecting peptide stretch occupies residues 84–88 (QHSGT). Beta/gamma crystallin 'Greek key' domains are found at residues 89–129 (YRMR…NVME) and 130–172 (GCWV…RRVM).

It belongs to the beta/gamma-crystallin family.

Its function is as follows. Crystallins are the dominant structural components of the vertebrate eye lens. In Rattus norvegicus (Rat), this protein is Gamma-crystallin B (Crygb).